We begin with the raw amino-acid sequence, 101 residues long: Small ribosomal subunit protein bS6 (101 aa).

The protein belongs to the bacterial ribosomal protein bS6 family.

Binds together with bS18 to 16S ribosomal RNA. This is Small ribosomal subunit protein bS6 from Paenarthrobacter aurescens (strain TC1).